The following is a 183-amino-acid chain: Putative ribosomal N-acetyltransferase YdaF (183 aa).

An N-acetyltransferase domain is found at 10–176 (ITIRLLEPKD…HDLVYYSLLK (167 aa)).

Belongs to the acetyltransferase family. Homohexamer, and homodimer.

Functionally, putative N-acetyltransferase. May act on ribosomal proteins (Potential). This is Putative ribosomal N-acetyltransferase YdaF (ydaF) from Bacillus subtilis (strain 168).